Reading from the N-terminus, the 811-residue chain is E3 ubiquitin-protein ligase RNF10 (811 aa).

Residues 1–10 show a composition bias toward polar residues; that stretch reads MPLSSPNAAA. Residues 1–119 form a disordered region; sequence MPLSSPNAAA…SFNGGRRDEV (119 aa). Ser-5 is subject to Phosphoserine. 3 stretches are compositionally biased toward low complexity: residues 18-31, 78-90, and 104-113; these read NSGS…SGSS, NNQS…QKSK, and SKLFSSSFNG. The tract at residues 101–185 is interaction with MEOX2; the sequence is GGSSKLFSSS…FNKELFLQAN (85 aa). A phosphoserine mark is found at Ser-110 and Ser-128. Residues 225–267 form an RING-type zinc finger; the sequence is CPICLYPPTAAKITRCGHIFCWACILHYLSLSEKTWSKCPICY. Residues 653–662 show a composition bias toward polar residues; sequence DSALGPTSTE. Disordered regions lie at residues 653-672, 724-761, and 776-811; these read DSAL…ISPL, DVWP…VPSF, and LDTP…VHTK. Residues 724-736 are compositionally biased toward basic and acidic residues; sequence DVWPKTAPKKDEN. Residues 802-811 are compositionally biased toward polar residues; it reads LFSTSVVHTK.

Belongs to the RNF10 family. As to quaternary structure, interacts with MEOX2.

It localises to the cytoplasm. The protein localises to the nucleus. It carries out the reaction S-ubiquitinyl-[E2 ubiquitin-conjugating enzyme]-L-cysteine + [acceptor protein]-L-lysine = [E2 ubiquitin-conjugating enzyme]-L-cysteine + N(6)-ubiquitinyl-[acceptor protein]-L-lysine.. Its pathway is protein modification; protein ubiquitination. In terms of biological role, E3 ubiquitin-protein ligase that catalyzes monoubiquitination of 40S ribosomal proteins RPS2/us5 and RPS3/us3 in response to ribosome stalling. Part of a ribosome quality control that takes place when ribosomes have stalled during translation initiation (iRQC): RNF10 acts by mediating monoubiquitination of RPS2/us5 and RPS3/us3, promoting their degradation by the proteasome. Also promotes ubiquitination of 40S ribosomal proteins in response to ribosome stalling during translation elongation. The action of RNF10 in iRQC is counteracted by USP10. May also act as a transcriptional factor involved in the regulation of MAG (Myelin-associated glycoprotein) expression. Acts as a regulator of Schwann cell differentiation and myelination. This Homo sapiens (Human) protein is E3 ubiquitin-protein ligase RNF10.